Here is a 309-residue protein sequence, read N- to C-terminus: Probable ABC transporter permease protein YqgH (309 aa).

Transmembrane regions (helical) follow at residues 30–50, 88–108, 133–153, 165–185, 214–234, and 280–300; these read MIVT…TIFL, FIFG…PLGI, LVGI…VPFI, LLAG…SISA, LVPA…ARAF, and NTLW…ILLI. One can recognise an ABC transmembrane type-1 domain in the interval 89–300; it reads IFGSFAVTIL…VMSFLFILLI (212 aa).

Belongs to the binding-protein-dependent transport system permease family. CysTW subfamily.

The protein localises to the cell membrane. Part of the binding-protein-dependent transport system YqgGHIJK. Probably responsible for the translocation of the substrate across the membrane. In Bacillus subtilis (strain 168), this protein is Probable ABC transporter permease protein YqgH (yqgH).